A 99-amino-acid chain; its full sequence is Acylphosphatase (99 aa).

The region spanning 5–97 (VRQVMIRGRV…RPGERFSQLP (93 aa)) is the Acylphosphatase-like domain. Catalysis depends on residues R20 and N38.

Belongs to the acylphosphatase family.

The enzyme catalyses an acyl phosphate + H2O = a carboxylate + phosphate + H(+). The protein is Acylphosphatase (acyP) of Nitrobacter winogradskyi (strain ATCC 25391 / DSM 10237 / CIP 104748 / NCIMB 11846 / Nb-255).